A 329-amino-acid chain; its full sequence is Cathepsin K (329 aa).

The signal sequence occupies residues 1–15; it reads MWGLTVLLLPVVSFA. Residues 16 to 114 constitute a propeptide, activation peptide; it reads LYPEEILDTQ…TLYIPDWEGR (99 aa). Asparagine 103 carries N-linked (GlcNAc...) asparagine glycosylation. 3 disulfide bridges follow: cysteine 136–cysteine 177, cysteine 170–cysteine 210, and cysteine 269–cysteine 318. Cysteine 139 is a catalytic residue. Active-site residues include histidine 276 and asparagine 296.

This sequence belongs to the peptidase C1 family.

It localises to the lysosome. It is found in the secreted. The protein localises to the apical cell membrane. It catalyses the reaction Broad proteolytic activity. With small-molecule substrates and inhibitors, the major determinant of specificity is P2, which is preferably Leu, Met &gt; Phe, and not Arg.. Thiol protease involved in osteoclastic bone resorption and may participate partially in the disorder of bone remodeling. Displays potent endoprotease activity against fibrinogen at acid pH. May play an important role in extracellular matrix degradation. Involved in the release of thyroid hormone thyroxine (T4) by limited proteolysis of TG/thyroglobulin in the thyroid follicle lumen. This chain is Cathepsin K (CTSK), found in Bos taurus (Bovine).